Here is a 215-residue protein sequence, read N- to C-terminus: MKLVLMGLPGAGKGTQAEQIVEKYNIPHISTGDMFRAAMKNNTELGRKAKSFMDNGDLVPDEVTNGIVRERLSEDDAKDGFLLDGFPRTVEQAQELENILSDLGTELDAVINIDVEKDVLMKRLTGRWICRTCGKTYHEIYNPPKVAGKCDLDGGELYQRDDDKKETVEKRLNVNMKQTKPLLDFYSEKGKLHNINGEQDIKDVFVDVEKILTSF.

An ATP-binding site is contributed by 10-15 (GAGKGT). Positions 30–59 (STGDMFRAAMKNNTELGRKAKSFMDNGDLV) are NMP. Residues threonine 31, arginine 36, 57-59 (DLV), 85-88 (GFPR), and glutamine 92 contribute to the AMP site. Residues 126-163 (GRWICRTCGKTYHEIYNPPKVAGKCDLDGGELYQRDDD) form an LID region. Arginine 127 lines the ATP pocket. Positions 130 and 133 each coordinate Zn(2+). 136–137 (TY) contributes to the ATP binding site. Positions 150 and 153 each coordinate Zn(2+). AMP contacts are provided by arginine 160 and arginine 171. Residue glutamine 199 participates in ATP binding.

Belongs to the adenylate kinase family. Monomer.

The protein localises to the cytoplasm. The enzyme catalyses AMP + ATP = 2 ADP. Its pathway is purine metabolism; AMP biosynthesis via salvage pathway; AMP from ADP: step 1/1. In terms of biological role, catalyzes the reversible transfer of the terminal phosphate group between ATP and AMP. Plays an important role in cellular energy homeostasis and in adenine nucleotide metabolism. In Listeria monocytogenes serotype 4a (strain HCC23), this protein is Adenylate kinase.